The primary structure comprises 465 residues: Glutamate--tRNA ligase (465 aa).

Residues 8-18 (PSPTGHLHIGG) carry the 'HIGH' region motif. Zn(2+)-binding residues include cysteine 97, cysteine 99, cysteine 124, and glutamate 126. Residues 234 to 238 (RLSKR) carry the 'KMSKS' region motif. Lysine 237 contributes to the ATP binding site.

Belongs to the class-I aminoacyl-tRNA synthetase family. Glutamate--tRNA ligase type 1 subfamily. Monomer. It depends on Zn(2+) as a cofactor.

It is found in the cytoplasm. It catalyses the reaction tRNA(Glu) + L-glutamate + ATP = L-glutamyl-tRNA(Glu) + AMP + diphosphate. Its function is as follows. Catalyzes the attachment of glutamate to tRNA(Glu) in a two-step reaction: glutamate is first activated by ATP to form Glu-AMP and then transferred to the acceptor end of tRNA(Glu). This chain is Glutamate--tRNA ligase, found in Thermodesulfovibrio yellowstonii (strain ATCC 51303 / DSM 11347 / YP87).